The following is a 74-amino-acid chain: RNA-binding protein Hfq (74 aa).

A Sm domain is found at 9 to 69 (DQFLNQLRKE…ISTFVPQKNV (61 aa)).

This sequence belongs to the Hfq family. Homohexamer.

Its function is as follows. RNA chaperone that binds small regulatory RNA (sRNAs) and mRNAs to facilitate mRNA translational regulation in response to envelope stress, environmental stress and changes in metabolite concentrations. Also binds with high specificity to tRNAs. This is RNA-binding protein Hfq from Bacillus cereus (strain Q1).